The chain runs to 122 residues: Large ribosomal subunit protein uL14 (122 aa).

It belongs to the universal ribosomal protein uL14 family. In terms of assembly, part of the 50S ribosomal subunit. Forms a cluster with proteins L3 and L19. In the 70S ribosome, L14 and L19 interact and together make contacts with the 16S rRNA in bridges B5 and B8.

In terms of biological role, binds to 23S rRNA. Forms part of two intersubunit bridges in the 70S ribosome. The sequence is that of Large ribosomal subunit protein uL14 from Colwellia psychrerythraea (strain 34H / ATCC BAA-681) (Vibrio psychroerythus).